We begin with the raw amino-acid sequence, 365 residues long: Protein RecA (365 aa).

76–83 lines the ATP pocket; sequence GPESSGKT. The segment at 346–365 is disordered; the sequence is DVPGSERDGDEDAGDMEASA. The span at 353–365 shows a compositional bias: acidic residues; sequence DGDEDAGDMEASA.

The protein belongs to the RecA family.

The protein localises to the cytoplasm. Its function is as follows. Can catalyze the hydrolysis of ATP in the presence of single-stranded DNA, the ATP-dependent uptake of single-stranded DNA by duplex DNA, and the ATP-dependent hybridization of homologous single-stranded DNAs. It interacts with LexA causing its activation and leading to its autocatalytic cleavage. This chain is Protein RecA, found in Parvibaculum lavamentivorans (strain DS-1 / DSM 13023 / NCIMB 13966).